Reading from the N-terminus, the 324-residue chain is Kelch domain-containing protein AF_2170 (324 aa).

2 Kelch repeats span residues 229–276 and 277–323; these read YIFA…VGGE and YIYI…NNGK.

The protein is Kelch domain-containing protein AF_2170 of Archaeoglobus fulgidus (strain ATCC 49558 / DSM 4304 / JCM 9628 / NBRC 100126 / VC-16).